We begin with the raw amino-acid sequence, 183 residues long: TATA-box-binding protein 1 (183 aa).

2 repeat units span residues 8–84 (IENV…AKKL) and 99–177 (VQNI…RQQL).

Belongs to the TBP family.

Functionally, general factor that plays a role in the activation of archaeal genes transcribed by RNA polymerase. Binds specifically to the TATA box promoter element which lies close to the position of transcription initiation. In Methanosarcina acetivorans (strain ATCC 35395 / DSM 2834 / JCM 12185 / C2A), this protein is TATA-box-binding protein 1.